Reading from the N-terminus, the 1290-residue chain is Period circadian protein homolog 1 (1290 aa).

The segment at 1–134 (MSGPLEGADG…SSEQSARART (134 aa)) is disordered. Residues 1 to 151 (MSGPLEGADG…LRELKLRLPP (151 aa)) are interaction with BTRC. The span at 25 to 38 (VPSPGPPQHRPCPG) shows a compositional bias: pro residues. Low complexity-rich tracts occupy residues 48 to 57 (NSNGSSGNES) and 64 to 115 (GASQ…ASSE). The span at 116–132 (QDNPSTSGCSSEQSARA) shows a compositional bias: polar residues. Thr121 is subject to Phosphothreonine; by CSNK1E. A phosphoserine; by CSNK1E mark is found at Ser122 and Ser126. Residues 138–147 (LMTALRELKL) carry the Nuclear export signal 1 motif. 2 PAS domains span residues 208-275 (ITSE…PSRL) and 348-414 (YEAP…KILQ). In terms of domain architecture, PAC spans 422 to 465 (HSPIRFCARNGEYVTMDTSWAGFVHPWSRKVAFVLGRHKVRTAP). Positions 489-498 (LSEQIHRLLL) match the Nuclear export signal 2 motif. Disordered regions lie at residues 508 to 544 (GLCG…PAPV) and 646 to 698 (TTKR…KEPV). Low complexity-rich tracts occupy residues 517–533 (SPGP…SNGG) and 652–662 (ASSSSYTTSSA). The tract at residues 596-815 (ELEAGSAPVQ…GLDSSSTAPS (220 aa)) is required for phosphorylation by CSNK1E. Phosphoserine occurs at positions 661, 663, and 704. Disordered stretches follow at residues 749-772 (GLAP…APDA), 805-874 (RGLD…PPAT), and 938-977 (ALQT…FNSR). A compositionally biased stretch (pro residues) spans 751 to 769 (APGPAPSPAPSPTVAPDPA). At Ser815 the chain carries Phosphoserine. The Nuclear localization signal motif lies at 827 to 843 (APPSRRHHCRSKAKRSR). Basic residues predominate over residues 830 to 847 (SRRHHCRSKAKRSRHHQN). Positions 860 to 874 (SPVPPSTPWPTPPAT) are enriched in pro residues. Over residues 950–961 (ASHSPSPSLPAL) the composition is skewed to low complexity. Phosphoserine occurs at positions 979 and 980. The short motif at 982–989 (LQLNLLQL) is the Nuclear export signal 3 element. The disordered stretch occupies residues 996–1037 (EGAAVAGGPGSSAGPPPPSAEAAEPEARLAEVTESSNQDALS). The LXXLL signature appears at 1043–1047 (LELLL). Over residues 1051–1062 (SRSGTGSAASGS) the composition is skewed to low complexity. 2 disordered regions span residues 1051 to 1098 (SRSG…SKYF) and 1207 to 1290 (SSTQ…NCTS). Residues 1063–1077 (LGSGLGSGSGSGSHE) are compositionally biased toward gly residues. The segment covering 1078-1095 (GGSTSASITRSSQSSHTS) has biased composition (low complexity). Residues 1149 to 1290 (SRDMTSVLKQ…ALPTAGNCTS (142 aa)) form a CRY binding domain region. A compositionally biased stretch (gly residues) spans 1236–1248 (GEQGSSGGGSGEG).

Homodimer. Component of the circadian core oscillator, which includes the CRY proteins, CLOCK or NPAS2, BMAL1 or BMAL2, CSNK1D and/or CSNK1E, TIMELESS, and the PER proteins. Interacts directly with TIMELESS, PER2, PER3, CRY1 and CRY2. Interacts with BMAL1 and CLOCK. Interacts with GPRASP1. Interacts (phosphorylated) with BTRC and FBXW11; the interactions trigger proteasomal degradation. Interacts with NONO, WDR5 and SFPQ. Interacts with USP2. Interacts with HNF4A. Post-translationally, phosphorylated on serine residues by CSNK1D, CSNK1E and probably also by CSNK1G2. Phosphorylation by CSNK1D or CSNK1E promotes nuclear location of PER proteins as well as ubiquitination and subsequent degradation. May be dephosphorylated by PP1. Ubiquitinated; requires phosphorylation by CSNK1E and interaction with BTRC and FBXW11. Deubiquitinated by USP2. Widely expressed. Expressed in hair follicles (at protein level). Found in heart, brain, placenta, lung, liver, skeletal muscle, pancreas, kidney, spleen, thymus, prostate, testis, ovary and small intestine. Highest level in skeletal muscle.

The protein localises to the nucleus. It is found in the cytoplasm. Transcriptional repressor which forms a core component of the circadian clock. The circadian clock, an internal time-keeping system, regulates various physiological processes through the generation of approximately 24 hour circadian rhythms in gene expression, which are translated into rhythms in metabolism and behavior. It is derived from the Latin roots 'circa' (about) and 'diem' (day) and acts as an important regulator of a wide array of physiological functions including metabolism, sleep, body temperature, blood pressure, endocrine, immune, cardiovascular, and renal function. Consists of two major components: the central clock, residing in the suprachiasmatic nucleus (SCN) of the brain, and the peripheral clocks that are present in nearly every tissue and organ system. Both the central and peripheral clocks can be reset by environmental cues, also known as Zeitgebers (German for 'timegivers'). The predominant Zeitgeber for the central clock is light, which is sensed by retina and signals directly to the SCN. The central clock entrains the peripheral clocks through neuronal and hormonal signals, body temperature and feeding-related cues, aligning all clocks with the external light/dark cycle. Circadian rhythms allow an organism to achieve temporal homeostasis with its environment at the molecular level by regulating gene expression to create a peak of protein expression once every 24 hours to control when a particular physiological process is most active with respect to the solar day. Transcription and translation of core clock components (CLOCK, NPAS2, BMAL1, BMAL2, PER1, PER2, PER3, CRY1 and CRY2) plays a critical role in rhythm generation, whereas delays imposed by post-translational modifications (PTMs) are important for determining the period (tau) of the rhythms (tau refers to the period of a rhythm and is the length, in time, of one complete cycle). A diurnal rhythm is synchronized with the day/night cycle, while the ultradian and infradian rhythms have a period shorter and longer than 24 hours, respectively. Disruptions in the circadian rhythms contribute to the pathology of cardiovascular diseases, cancer, metabolic syndromes and aging. A transcription/translation feedback loop (TTFL) forms the core of the molecular circadian clock mechanism. Transcription factors, CLOCK or NPAS2 and BMAL1 or BMAL2, form the positive limb of the feedback loop, act in the form of a heterodimer and activate the transcription of core clock genes and clock-controlled genes (involved in key metabolic processes), harboring E-box elements (5'-CACGTG-3') within their promoters. The core clock genes: PER1/2/3 and CRY1/2 which are transcriptional repressors form the negative limb of the feedback loop and interact with the CLOCK|NPAS2-BMAL1|BMAL2 heterodimer inhibiting its activity and thereby negatively regulating their own expression. This heterodimer also activates nuclear receptors NR1D1/2 and RORA/B/G, which form a second feedback loop and which activate and repress BMAL1 transcription, respectively. Regulates circadian target genes expression at post-transcriptional levels, but may not be required for the repression at transcriptional level. Controls PER2 protein decay. Represses CRY2 preventing its repression on CLOCK/BMAL1 target genes such as FXYD5 and SCNN1A in kidney and PPARA in liver. Besides its involvement in the maintenance of the circadian clock, has an important function in the regulation of several processes. Participates in the repression of glucocorticoid receptor NR3C1/GR-induced transcriptional activity by reducing the association of NR3C1/GR to glucocorticoid response elements (GREs) by BMAL1:CLOCK. Plays a role in the modulation of the neuroinflammatory state via the regulation of inflammatory mediators release, such as CCL2 and IL6. In spinal astrocytes, negatively regulates the MAPK14/p38 and MAPK8/JNK MAPK cascades as well as the subsequent activation of NFkappaB. Coordinately regulates the expression of multiple genes that are involved in the regulation of renal sodium reabsorption. Can act as gene expression activator in a gene and tissue specific manner, in kidney enhances WNK1 and SLC12A3 expression in collaboration with CLOCK. Modulates hair follicle cycling. Represses the CLOCK-BMAL1 induced transcription of BHLHE40/DEC1. This Homo sapiens (Human) protein is Period circadian protein homolog 1 (PER1).